A 297-amino-acid chain; its full sequence is Bilin biosynthesis protein MpeU (297 aa).

It belongs to the CpcE/RpcE/PecE family.

Its function is as follows. An enzyme involved in the biosynthesis of bilin. In Synechococcus sp. (strain WH8020), this protein is Bilin biosynthesis protein MpeU (mpeU).